A 151-amino-acid chain; its full sequence is Large ribosomal subunit protein eL8 (151 aa).

This sequence belongs to the eukaryotic ribosomal protein eL8 family. As to quaternary structure, part of the 50S ribosomal subunit. Probably part of the RNase P complex.

It localises to the cytoplasm. In terms of biological role, multifunctional RNA-binding protein that recognizes the K-turn motif in ribosomal RNA, the RNA component of RNase P, box H/ACA, box C/D and box C'/D' sRNAs. In Pyrobaculum neutrophilum (strain DSM 2338 / JCM 9278 / NBRC 100436 / V24Sta) (Thermoproteus neutrophilus), this protein is Large ribosomal subunit protein eL8.